Reading from the N-terminus, the 187-residue chain is Adenylate kinase (187 aa).

An ATP-binding site is contributed by 11–16; the sequence is GAGKGT. The tract at residues 31-60 is NMP; it reads STGDILREAVKNQTAMGIEAKRYMDAGDLV. AMP contacts are provided by residues Thr32, Arg37, 58 to 60, 86 to 89, and Gln93; these read DLV and GFPR. The segment at 127–137 is LID; it reads GRAEIEGRADD. Arg128 contacts ATP. AMP contacts are provided by Arg134 and Arg145. Gly173 serves as a coordination point for ATP.

It belongs to the adenylate kinase family. Monomer.

The protein resides in the cytoplasm. The enzyme catalyses AMP + ATP = 2 ADP. It participates in purine metabolism; AMP biosynthesis via salvage pathway; AMP from ADP: step 1/1. Its function is as follows. Catalyzes the reversible transfer of the terminal phosphate group between ATP and AMP. Plays an important role in cellular energy homeostasis and in adenine nucleotide metabolism. The sequence is that of Adenylate kinase from Leptospira interrogans serogroup Icterohaemorrhagiae serovar copenhageni (strain Fiocruz L1-130).